The chain runs to 274 residues: MATSVIKSWADAEDEIPAAEVINNPDGTKTVINYRMNANGQKIRHIQKIREVKVKEKVHPLIAMRKNWSKYGKEKDMPAGPDARTTQLGEVVELKLGTSWKEIEKEEEEQKAEQTQQIVSNQRIKCRTCGGNHFTSKCPFKDTLISDSANTSAAATPEPDTDASGKYVPPSLRKGAGAVRDMSGRDRDDSTTLKISQLNTFVDEDMLRNELLKRFHPLQRVTIVRNRETGESRGFAYVSFVTERQAEEALNTLNGKGYHSLILHLEWPKKRKAN.

A phosphoserine mark is found at S146, S164, and S171. The disordered stretch occupies residues 149–170 (ANTSAAATPEPDTDASGKYVPP). Positions 191–270 (TTLKISQLNT…LILHLEWPKK (80 aa)) constitute an RRM domain.

Belongs to the eIF-3 subunit G family. As to quaternary structure, component of the eukaryotic translation initiation factor 3 (eIF-3) complex.

The protein resides in the cytoplasm. RNA-binding component of the eukaryotic translation initiation factor 3 (eIF-3) complex, which is involved in protein synthesis of a specialized repertoire of mRNAs and, together with other initiation factors, stimulates binding of mRNA and methionyl-tRNAi to the 40S ribosome. The eIF-3 complex specifically targets and initiates translation of a subset of mRNAs involved in cell proliferation. This subunit can bind 18S rRNA. This chain is Eukaryotic translation initiation factor 3 subunit G, found in Meyerozyma guilliermondii (strain ATCC 6260 / CBS 566 / DSM 6381 / JCM 1539 / NBRC 10279 / NRRL Y-324) (Yeast).